We begin with the raw amino-acid sequence, 710 residues long: Probable inactive DNA (cytosine-5)-methyltransferase DRM3 (710 aa).

The tract at residues 1-21 (MADMRRRNGSGGSSNHERNEQ) is disordered. One can recognise a UBA 1 domain in the interval 52–92 (SGSNVKSLLIEMGFCPTLVQKAIDENGQDDFELLLEILTKS). Residues 167–184 (ESEDSLDGAEINEEDEDV) show a composition bias toward acidic residues. Residues 167–192 (ESEDSLDGAEINEEDEDVTPVTARGP) are disordered. One can recognise a UBA 2 domain in the interval 198–242 (QLFETMDKTLRLLEMGFSNDEISMAIEKIGTKGQISVLAESIVTG). Residues 282-360 (AQKEDGGGGS…MGDSSSFMET (79 aa)) form a disordered region. The span at 339–350 (YDDRGKRLRPED) shows a compositional bias: basic and acidic residues. The 332-residue stretch at 379–710 (QPRLSQSLGP…RVTKRVRDMM (332 aa)) folds into the SAM-dependent MTase DRM-type domain.

It belongs to the class I-like SAM-binding methyltransferase superfamily. DRM-methyltransferase family. In terms of assembly, interacts with Pol V.

The protein localises to the nucleus. Its function is as follows. Catalytically inactive DNA methyltransferase that acts as regulatory factor for DRM2-mediated DNA methylation. Required for maintenance of non-CpG DNA methylation. Required for normal establishment and maintenance of RNA-directed DNA methylation (RdDM) and accumulation of specific repeat-associated small interfering RNAs (siRNAs). Required for nucleolus organizer region (NOR) nuclear organization during interphase. Acts downstream of the production of siRNAs. May promote RNA polymerase V (Pol V) transcriptional elongation or assist in the stabilization of Pol V transcripts. This chain is Probable inactive DNA (cytosine-5)-methyltransferase DRM3, found in Arabidopsis thaliana (Mouse-ear cress).